The chain runs to 470 residues: Poly(A) polymerase catalytic subunit (470 aa).

Catalysis depends on residues aspartate 192 and aspartate 194.

The protein belongs to the poxviridae poly(A) polymerase catalytic subunit family. Heterodimer of a large (catalytic) subunit and a small (regulatory) subunit.

The enzyme catalyses RNA(n) + ATP = RNA(n)-3'-adenine ribonucleotide + diphosphate. In terms of biological role, polymerase that creates the 3'-poly(A) tail of mRNA's. The protein is Poly(A) polymerase catalytic subunit (PAPL) of Molluscum contagiosum virus subtype 1 (MOCV).